Reading from the N-terminus, the 693-residue chain is MNKPFLLELGLEELPARFVTPSITQLAEKVQAWLDDKGLSYGEIHSYATPRRLAILVENLADRQPDIHDESRGPALKIAKDESGAWTKAALGFAKGQGVETSQLEIKAVNGTDYVFAKTHKKGEKTSVLLPELKELITGLTFPKSMRWNTYSLRYARPIQWLVALYGEDVIPFSINGIETGRNTTGHRFLGADFPLDNPIEYADALKRQYVIADAEERKAAIVSQLKQMEEEHSWVVPIDEALLEEVTQLVEYPTALSGSFDDSFLALPKEVLITTMREHQRYFPVEAKDGRLLPYFITVRNGNEEYIENVAKGNEKVLRARLSDAAFFYHEDQKISLQAANAKLDNIVFHEAIGTMGEKVARIGELSKWLAGEANLGAQERQTVERAAAIAKFDLVTYMVGEFPELQGRMGQEYAEKAGETPQVAKAIYEQYLPRYAGDKVPETEAGAVLALADKLDTVVSCFSIGLIPTGSQDPYALRRQATGIIHILLQTEMPLTLENMAVHALDSIAKKGFMTEKVETTKQELISFFANRLKHVMLEAGFRYDIVDAVLAAPLVDVYTMFAKARLLTERAEDREFKEVTESLSRVTNLAKKAPKGVFVSENLFENETESRLLAATLEVEFGLAEAWKVKDAYAAYQALAQCRATINTFFDHTMVMADNEATRNNRLALLDRLAKSIQSYADFQKIVFSA.

It belongs to the class-II aminoacyl-tRNA synthetase family. Tetramer of two alpha and two beta subunits.

Its subcellular location is the cytoplasm. It catalyses the reaction tRNA(Gly) + glycine + ATP = glycyl-tRNA(Gly) + AMP + diphosphate. This chain is Glycine--tRNA ligase beta subunit, found in Shouchella clausii (strain KSM-K16) (Alkalihalobacillus clausii).